A 389-amino-acid polypeptide reads, in one-letter code: Teichoic acid glycerol-phosphate transferase (389 aa).

Belongs to the CDP-glycerol glycerophosphotransferase family.

It is found in the cell membrane. The catalysed reaction is 4-O-[(2R)-glycerylphospho]-N-acetyl-beta-D-mannosaminyl-(1-&gt;4)-N-acetyl-alpha-D-glucosaminyl di-trans,octa-cis-undecaprenyl diphosphate + CDP-glycerol = 4-O-[di(2R)-glycerylphospho]-N-acetyl-beta-D-mannosaminyl-(1-&gt;4)-N-acetyl-alpha-D-glucosaminyl di-trans,octa-cis-undecaprenyl diphosphate + CMP + H(+). It functions in the pathway cell wall biogenesis; poly(ribitol phosphate) teichoic acid biosynthesis. Functionally, catalyzes the addition of a second glycerol phosphate unit from CDP-glycerol to the prenolpyrophosphate-linked disaccharide, to complete the linkage unit. The polypeptide is Teichoic acid glycerol-phosphate transferase (tarF) (Staphylococcus aureus (strain NCTC 8325 / PS 47)).